A 478-amino-acid polypeptide reads, in one-letter code: MSSFLVSSNNLPEREIPGDYGFPIISAIKDRYDYFYKQGEDVWFHSKAEKYNSTVVKINMAPGPFTSNDYKLVAFLDANSFVYMFDNSLIDKTDTLGGTFKPGKEYYGGYRPVAFVDTSDPNHAALKNYILTSFAKRHNLFIPLFRNSVSDHLFQNLEKQVSDQGKSDFNALLPNMTFGFIFRLLCDQTNPSDTVLGAQGPEHLRKWLFPQLIPSLSARKLPSFIEDLLFHNFLIPFGLVKSDYNKLVDAFSKNAGSMLDEAEKLGIKREEAVHNILFLVGINMFAGLNAFFPHLIRFVGEAGPTLHARLAKEIRTAIKEEGGAVTLSAINKMSLVESIVYETLRLRPPVPLQYGKAKKDFMVQSHDASYMIKKGQFLVGYQPMASRDPKIFDKPDDFIPDRFMGEGVKMLKHVLWSNGRETENPAPDNKQCAGKDLVHLLGRLMLVEFFLRYDTFTVEITPLFRAPNVAIKTLTKAT.

Residue cysteine 432 participates in heme binding.

Belongs to the cytochrome P450 family. 9-divinyl ether synthase subfamily. Not detected in leaves, stems or roots of healthy plants.

The protein resides in the cytoplasm. It is found in the cytosol. The catalysed reaction is (9S)-hydroperoxy-(10E,12Z)-octadecadienoate = colneleate + H2O. It carries out the reaction (9S)-hydroperoxy-(10E,12Z,15Z)-octadecatrienoate = colnelenate + H2O. Its function is as follows. Strictly inducible cytochrome P450 involved in the biosynthesis of the anti-fungal toxins colneleate and colnelenate. Can use (9S)-hydroperoxy-(10E,12Z)-octadecadienoate (9-HPOD) and (9S)-hydroperoxy-(10E,12Z,15Z)-octadecatrienoate (9-HPOT) as substrates, but has a very low activity with the corresponding 13-hydroperoxides (13-HPOD and 13-POT). The protein is Divinyl ether synthase CYP74D3 of Nicotiana tabacum (Common tobacco).